We begin with the raw amino-acid sequence, 213 residues long: Orotate phosphoribosyltransferase (213 aa).

5-phospho-alpha-D-ribose 1-diphosphate is bound at residue Lys26. Residue 34–35 participates in orotate binding; sequence FF. 5-phospho-alpha-D-ribose 1-diphosphate contacts are provided by residues 72-73, Arg98, Lys99, Lys102, His104, and 123-131; these read YK and DDVISAGTS. Orotate contacts are provided by Ser127 and Arg155.

This sequence belongs to the purine/pyrimidine phosphoribosyltransferase family. PyrE subfamily. As to quaternary structure, homodimer. Mg(2+) serves as cofactor.

The enzyme catalyses orotidine 5'-phosphate + diphosphate = orotate + 5-phospho-alpha-D-ribose 1-diphosphate. The protein operates within pyrimidine metabolism; UMP biosynthesis via de novo pathway; UMP from orotate: step 1/2. Functionally, catalyzes the transfer of a ribosyl phosphate group from 5-phosphoribose 1-diphosphate to orotate, leading to the formation of orotidine monophosphate (OMP). The chain is Orotate phosphoribosyltransferase from Neisseria meningitidis serogroup C (strain 053442).